Here is a 321-residue protein sequence, read N- to C-terminus: XylDLEGF operon transcriptional activator 1 (321 aa).

Residues 214 to 315 form the HTH araC/xylS-type domain; the sequence is ERVVQFIEEN…GELPSDTLRQ (102 aa). DNA-binding regions (H-T-H motif) lie at residues 231 to 252 and 282 to 305; these read ERLA…EKHA and ITEI…RSAF.

Its subcellular location is the cytoplasm. Its function is as follows. Regulatory protein of the TOL plasmid xyl operons. XylS activates the xylXYZLTEGFJQKIH operon required for the degradation of toluene, m-xylene and p-xylene. The protein is XylDLEGF operon transcriptional activator 1 (xylS1) of Pseudomonas putida (Arthrobacter siderocapsulatus).